A 480-amino-acid polypeptide reads, in one-letter code: RAC-alpha serine/threonine-protein kinase (480 aa).

In terms of domain architecture, PH spans 5–108 (AIVKEGWLHK…WATAIQTVAD (104 aa)). K14 and K20 each carry N6-acetyllysine. 14–19 (KRGEYI) is a 1D-myo-inositol 1,3,4,5-tetrakisphosphate binding site. 1D-myo-inositol 1,3,4,5-tetrakisphosphate is bound by residues 23–25 (RPR) and N53. C60 and C77 are disulfide-bonded. R86 lines the 1D-myo-inositol 1,3,4,5-tetrakisphosphate pocket. The segment at 114–137 (EEETMDFRSGSPSDNSGAEEMEVS) is disordered. The residue at position 124 (S124) is a Phosphoserine. 2 positions are modified to phosphoserine; alternate: S126 and S129. 2 O-linked (GlcNAc) serine; alternate glycosylation sites follow: S126 and S129. The Protein kinase domain maps to 150-408 (FEYLKLLGKG…AKEIMQHRFF (259 aa)). 156-164 (LGKGTFGKV) lines the ATP pocket. Y176 is subject to Phosphotyrosine; by TNK2. K179 is a binding site for ATP. D274 serves as the catalytic Proton acceptor. K284 participates in a covalent cross-link: Glycyl lysine isopeptide (Lys-Gly) (interchain with G-Cter in ubiquitin). Residues C296 and C310 are joined by a disulfide bond. T305 is a glycosylation site (O-linked (GlcNAc) threonine). A Phosphothreonine; by IKKE, PDPK1 and TBK1 modification is found at T308. T312 is a glycosylation site (O-linked (GlcNAc) threonine). The AGC-kinase C-terminal domain maps to 409–480 (ANIVWQDVYE…QFSYSASGTA (72 aa)). Phosphothreonine is present on T448. T450 carries the phosphothreonine; by MTOR modification. A disordered region spans residues 450–480 (TPPDQDDSMECVDSERRPHFPQFSYSASGTA). S473 is a glycosylation site (O-linked (GlcNAc) serine; alternate). A Phosphoserine; by IKKE, MTOR, PRKDC and TBK1; alternate modification is found at S473. At Y474 the chain carries Phosphotyrosine. Phosphoserine; by CDK2 and MTOR is present on S477. At T479 the chain carries Phosphothreonine; by CDK2 and MTOR.

This sequence belongs to the protein kinase superfamily. AGC Ser/Thr protein kinase family. RAC subfamily. Interacts with and phosphorylated by PDPK1. Interacts with AGAP2 (isoform 2/PIKE-A); the interaction occurs in the presence of guanine nucleotides. Interacts with AKTIP. Interacts (via PH domain) with MTCP1, TCL1A and TCL1B. Interacts with CDKN1B; the interaction phosphorylates CDKN1B promoting 14-3-3 binding and cell-cycle progression. Interacts with MAP3K5 and TRAF6. Interacts with BAD, PPP2R5B, STK3 and STK4. Interacts (via PH domain) with SIRT1. Interacts with SRPK2 in a phosphorylation-dependent manner. Interacts with TRIM13; the interaction ubiquitinates AKT1 leading to its proteasomal degradation. Interacts with RAF1. Interacts (via the C-terminus) with CCDC88A (via its C-terminus) and THEM4 (via its C-terminus). Interacts with GRB10; the interaction leads to GRB10 phosphorylation thus promoting YWHAE-binding. Interacts with KCTD20. Interacts with BTBD10. Interacts with PA2G4. Interacts with KIF14; the interaction is detected in the plasma membrane upon INS stimulation and promotes AKT1 phosphorylation. Interacts with FAM83B; activates the PI3K/AKT signaling cascade. Interacts with WDFY2 (via WD repeats 1-3). Forms a complex with WDFY2 and FOXO1. Interacts with FAM168A. Interacts with SYAP1 (via phosphorylated form and BSD domain); this interaction is enhanced in a mTORC2-mediated manner in response to epidermal growth factor (EGF) stimulation and activates AKT1. Interacts with PKHM3. Interacts with FKBP5/FKBP51; promoting interaction between Akt/AKT1 and PHLPP1, thereby enhancing dephosphorylation and subsequent activation of Akt/AKT1. Interacts with TMEM175; leading to formation of the lysoK(GF) complex. In terms of processing, O-GlcNAcylation at Thr-305 and Thr-312 inhibits activating phosphorylation at Thr-308 via disrupting the interaction between AKT1 and PDPK1. O-GlcNAcylation at Ser-473 also probably interferes with phosphorylation at this site. Phosphorylation on Thr-308, Ser-473 and Tyr-474 is required for full activity. Phosphorylation of the activation loop at Thr-308 by PDPK1/PDK1 is a prerequisite for full activation. Phosphorylation by mTORC2 in response to growth factors plays a key role in AKT1 activation: mTORC2 phosphorylates different sites depending on the context, such as Thr-450, Ser-473, Ser-477 or Thr-479, thereby facilitating subsequent phosphorylation of the activation loop by PDPK1/PDK1. Phosphorylation at Ser-473 by mTORC2 promotes ubiquitination and degradation by the proteasome. Also phosphorylated at Ser-477 and Thr-479 by CDK2, facilitating subsequent phosphorylation of the activation loop by PDPK1/PDK1. Activated TNK2 phosphorylates it on Tyr-176 resulting in its binding to the anionic plasma membrane phospholipid PA. This phosphorylated form localizes to the cell membrane, where it is targeted by PDPK1 and PDPK2 for further phosphorylations on Thr-308 and Ser-473 leading to its activation. Phosphorylated at Thr-308 and Ser-473 by IKBKE and TBK1. Ser-473 phosphorylation is enhanced by interaction with AGAP2 isoform 2 (PIKE-A). Ser-473 phosphorylation is enhanced by signaling through activated FLT3. Ser-473 is dephosphorylated by PHLPP. Dephosphorylated at Thr-308 and Ser-473 by PP2A phosphatase. The phosphorylated form of PPP2R5B is required for bridging AKT1 with PP2A phosphatase. Ser-473 is dephosphorylated by CPPED1, leading to termination of signaling. AIM2 acts as an inhibitor of AKT1 by inhibiting phosphorylation Ser-473: AIM2 acts both by inhibiting the activity of PRKDC/DNA-PK kinase and promoting dephosphorylation by PP2A phosphatase. Post-translationally, ubiquitinated; undergoes both 'Lys-48'- and 'Lys-63'-linked polyubiquitination. TRAF6-induced 'Lys-63'-linked AKT1 ubiquitination is critical for phosphorylation and activation. When ubiquitinated, it translocates to the plasma membrane, where it becomes phosphorylated. When fully phosphorylated and translocated into the nucleus, undergoes 'Lys-48'-polyubiquitination catalyzed by TTC3, leading to its degradation by the proteasome. Also ubiquitinated by TRIM13 leading to its proteasomal degradation. Ubiquitinated via 'Lys-48'-linked polyubiquitination by ZNRF1, leading to its degradation by the proteasome. Phosphorylated, undergoes 'Lys-48'-linked polyubiquitination preferentially at Lys-284 catalyzed by MUL1, leading to its proteasomal degradation. In terms of processing, acetylated on Lys-14 and Lys-20 by the histone acetyltransferases EP300 and KAT2B. Acetylation results in reduced phosphorylation and inhibition of activity. Deacetylated at Lys-14 and Lys-20 by SIRT1. SIRT1-mediated deacetylation relieves the inhibition. Cleavage by caspase-3/CASP3. Cleaved at the caspase-3 consensus site Asp-462 during apoptosis, resulting in down-regulation of the AKT signaling pathway and decreased cell survival. Widely expressed. Low levels found in liver with slightly higher levels present in thymus and testis.

It is found in the cytoplasm. The protein resides in the nucleus. It localises to the cell membrane. Its subcellular location is the mitochondrion intermembrane space. It catalyses the reaction L-seryl-[protein] + ATP = O-phospho-L-seryl-[protein] + ADP + H(+). It carries out the reaction L-threonyl-[protein] + ATP = O-phospho-L-threonyl-[protein] + ADP + H(+). With respect to regulation, three specific sites, one in the kinase domain (Thr-308) and the two other ones in the C-terminal regulatory region (Ser-473 and Tyr-474), need to be phosphorylated for its full activation. AKT1 is one of 3 closely related serine/threonine-protein kinases (AKT1, AKT2 and AKT3) called the AKT kinase, and which regulate many processes including metabolism, proliferation, cell survival, growth and angiogenesis. This is mediated through serine and/or threonine phosphorylation of a range of downstream substrates. Over 100 substrate candidates have been reported so far, but for most of them, no isoform specificity has been reported. AKT is responsible of the regulation of glucose uptake by mediating insulin-induced translocation of the SLC2A4/GLUT4 glucose transporter to the cell surface. Phosphorylation of PTPN1 at 'Ser-50' negatively modulates its phosphatase activity preventing dephosphorylation of the insulin receptor and the attenuation of insulin signaling. Phosphorylation of TBC1D4 triggers the binding of this effector to inhibitory 14-3-3 proteins, which is required for insulin-stimulated glucose transport. AKT also regulates the storage of glucose in the form of glycogen by phosphorylating GSK3A at 'Ser-21' and GSK3B at 'Ser-9', resulting in inhibition of its kinase activity. Phosphorylation of GSK3 isoforms by AKT is also thought to be one mechanism by which cell proliferation is driven. AKT also regulates cell survival via the phosphorylation of MAP3K5 (apoptosis signal-related kinase). Phosphorylation of 'Ser-83' decreases MAP3K5 kinase activity stimulated by oxidative stress and thereby prevents apoptosis. AKT mediates insulin-stimulated protein synthesis by phosphorylating TSC2 at 'Ser-939' and 'Thr-1462', thereby activating the mTORC1 signaling pathway, and leading to both phosphorylation of 4E-BP1 and in activation of RPS6KB1. Also regulates the mTORC1 signaling pathway by catalyzing phosphorylation of CASTOR1 and DEPDC5. AKT plays a role as key modulator of the AKT-mTOR signaling pathway controlling the tempo of the process of newborn neurons integration during adult neurogenesis, including correct neuron positioning, dendritic development and synapse formation. Part of a positive feedback loop of mTORC2 signaling by mediating phosphorylation of MAPKAP1/SIN1, promoting mTORC2 activation. AKT is involved in the phosphorylation of members of the FOXO factors (Forkhead family of transcription factors), leading to binding of 14-3-3 proteins and cytoplasmic localization. In particular, FOXO1 is phosphorylated at 'Thr-24', 'Ser-256' and 'Ser-319'. FOXO3 and FOXO4 are phosphorylated on equivalent sites. AKT has an important role in the regulation of NF-kappa-B-dependent gene transcription and positively regulates the activity of CREB1 (cyclic AMP (cAMP)-response element binding protein). The phosphorylation of CREB1 induces the binding of accessory proteins that are necessary for the transcription of pro-survival genes such as BCL2 and MCL1. AKT phosphorylates 'Ser-454' on ATP citrate lyase (ACLY), thereby potentially regulating ACLY activity and fatty acid synthesis. Activates the 3B isoform of cyclic nucleotide phosphodiesterase (PDE3B) via phosphorylation of 'Ser-273', resulting in reduced cyclic AMP levels and inhibition of lipolysis. Phosphorylates PIKFYVE on 'Ser-318', which results in increased PI(3)P-5 activity. The Rho GTPase-activating protein DLC1 is another substrate and its phosphorylation is implicated in the regulation cell proliferation and cell growth. Signals downstream of phosphatidylinositol 3-kinase (PI(3)K) to mediate the effects of various growth factors such as platelet-derived growth factor (PDGF), epidermal growth factor (EGF), insulin and insulin-like growth factor 1 (IGF1). AKT mediates the antiapoptotic effects of IGF1. Essential for the SPATA13-mediated regulation of cell migration and adhesion assembly and disassembly. May be involved in the regulation of the placental development. Phosphorylates STK4/MST1 at 'Thr-120' and 'Thr-387' leading to inhibition of its: kinase activity, nuclear translocation, autophosphorylation and ability to phosphorylate FOXO3. Phosphorylates STK3/MST2 at 'Thr-117' and 'Thr-384' leading to inhibition of its: cleavage, kinase activity, autophosphorylation at Thr-180, binding to RASSF1 and nuclear translocation. Phosphorylates SRPK2 and enhances its kinase activity towards SRSF2 and ACIN1 and promotes its nuclear translocation. Phosphorylates RAF1 at 'Ser-259' and negatively regulates its activity. Phosphorylation of BAD stimulates its pro-apoptotic activity. Phosphorylates KAT6A at 'Thr-369' and this phosphorylation inhibits the interaction of KAT6A with PML and negatively regulates its acetylation activity towards p53/TP53. Phosphorylates palladin (PALLD), modulating cytoskeletal organization and cell motility. Phosphorylates prohibitin (PHB), playing an important role in cell metabolism and proliferation. Phosphorylates CDKN1A, for which phosphorylation at 'Thr-145' induces its release from CDK2 and cytoplasmic relocalization. These recent findings indicate that the AKT1 isoform has a more specific role in cell motility and proliferation. Phosphorylates CLK2 thereby controlling cell survival to ionizing radiation. Phosphorylates PCK1 at 'Ser-90', reducing the binding affinity of PCK1 to oxaloacetate and changing PCK1 into an atypical protein kinase activity using GTP as donor. Also acts as an activator of TMEM175 potassium channel activity in response to growth factors: forms the lysoK(GF) complex together with TMEM175 and acts by promoting TMEM175 channel activation, independently of its protein kinase activity. Acts as a negative regulator of the cGAS-STING pathway by mediating phosphorylation of CGAS during mitosis, leading to its inhibition. Acts as a regulator of mitochondrial calcium uptake by mediating phosphorylation of MICU1 in the mitochondrial intermembrane space, impairing MICU1 maturation. Acts as an inhibitor of tRNA methylation by mediating phosphorylation of the N-terminus of METTL1, thereby inhibiting METTL1 methyltransferase activity. In response to LPAR1 receptor pathway activation, phosphorylates Rabin8/RAB3IP which alters its activity and phosphorylates WDR44 which induces WDR44 binding to Rab11, thereby switching Rab11 vesicular function from preciliary trafficking to endocytic recycling. This Mus musculus (Mouse) protein is RAC-alpha serine/threonine-protein kinase (Akt1).